Reading from the N-terminus, the 95-residue chain is Aspartyl/glutamyl-tRNA(Asn/Gln) amidotransferase subunit C (95 aa).

The protein belongs to the GatC family. Heterotrimer of A, B and C subunits.

The catalysed reaction is L-glutamyl-tRNA(Gln) + L-glutamine + ATP + H2O = L-glutaminyl-tRNA(Gln) + L-glutamate + ADP + phosphate + H(+). It carries out the reaction L-aspartyl-tRNA(Asn) + L-glutamine + ATP + H2O = L-asparaginyl-tRNA(Asn) + L-glutamate + ADP + phosphate + 2 H(+). Allows the formation of correctly charged Asn-tRNA(Asn) or Gln-tRNA(Gln) through the transamidation of misacylated Asp-tRNA(Asn) or Glu-tRNA(Gln) in organisms which lack either or both of asparaginyl-tRNA or glutaminyl-tRNA synthetases. The reaction takes place in the presence of glutamine and ATP through an activated phospho-Asp-tRNA(Asn) or phospho-Glu-tRNA(Gln). The protein is Aspartyl/glutamyl-tRNA(Asn/Gln) amidotransferase subunit C of Acetivibrio thermocellus (strain ATCC 27405 / DSM 1237 / JCM 9322 / NBRC 103400 / NCIMB 10682 / NRRL B-4536 / VPI 7372) (Clostridium thermocellum).